The sequence spans 377 residues: Nitric oxide reductase FlRd-NAD(+) reductase (377 aa).

It belongs to the FAD-dependent oxidoreductase family. Requires FAD as cofactor.

It is found in the cytoplasm. The enzyme catalyses 2 reduced [nitric oxide reductase rubredoxin domain] + NAD(+) + H(+) = 2 oxidized [nitric oxide reductase rubredoxin domain] + NADH. It functions in the pathway nitrogen metabolism; nitric oxide reduction. In terms of biological role, one of at least two accessory proteins for anaerobic nitric oxide (NO) reductase. Reduces the rubredoxin moiety of NO reductase. The chain is Nitric oxide reductase FlRd-NAD(+) reductase from Salmonella agona (strain SL483).